The following is a 110-amino-acid chain: Ribonuclease P protein component 1 (110 aa).

This sequence belongs to the eukaryotic/archaeal RNase P protein component 1 family. Consists of a catalytic RNA component and at least 4-5 protein subunits.

The protein resides in the cytoplasm. It catalyses the reaction Endonucleolytic cleavage of RNA, removing 5'-extranucleotides from tRNA precursor.. Functionally, part of ribonuclease P, a protein complex that generates mature tRNA molecules by cleaving their 5'-ends. The sequence is that of Ribonuclease P protein component 1 from Aeropyrum pernix (strain ATCC 700893 / DSM 11879 / JCM 9820 / NBRC 100138 / K1).